The chain runs to 182 residues: Adenylate kinase (182 aa).

12-17 contributes to the ATP binding site; the sequence is GAGKGT. Residues 32 to 61 are NMP; it reads STGDLLRDEVSSGSVLGIKAAEIMNKGELV. Residues T33, R38, 59–61, 85–88, and Q92 contribute to the AMP site; these read ELV and GFPR. Residues 126–132 are LID; sequence ERGRQDD. R127 contacts ATP. AMP contacts are provided by R129 and R140. A168 is a binding site for ATP.

This sequence belongs to the adenylate kinase family. Monomer.

It localises to the cytoplasm. The enzyme catalyses AMP + ATP = 2 ADP. It functions in the pathway purine metabolism; AMP biosynthesis via salvage pathway; AMP from ADP: step 1/1. Catalyzes the reversible transfer of the terminal phosphate group between ATP and AMP. Plays an important role in cellular energy homeostasis and in adenine nucleotide metabolism. The protein is Adenylate kinase of Prochlorococcus marinus (strain NATL1A).